Reading from the N-terminus, the 368-residue chain is Propane 2-monooxygenase, hydroxylase component small subunit (368 aa).

Residues 1–33 form a disordered region; it reads MSAPAQPRERSFPSIEFTDAEADAREFPSSRSR.

It belongs to the TmoE/XamoE family. In terms of assembly, the propane 2-monooxygenase multicomponent enzyme system is composed of an electron transfer component and a monooxygenase component interacting with the effector protein PrmD. The electron transfer component is composed of a reductase (PrmB), and the monooxygenase component is formed by a large subunit (PrmA) and a small subunit (PrmC). Probably requires the presence of the chaperonin-like protein PrmG to ensure a productive folding, resulting of a soluble PrmC, which leads to the active form of PrmABCD.

The enzyme catalyses propane + NADH + O2 + H(+) = propan-2-ol + NAD(+) + H2O. It carries out the reaction phenol + NADH + O2 + H(+) = hydroquinone + NAD(+) + H2O. In terms of biological role, component of the propane 2-monooxygenase multicomponent enzyme system which is involved in the degradation of propane via the O2-dependent hydroxylation of propane. Under acetone induction, also able to catalyze the oxidation of phenol to yield hydroquinone. This chain is Propane 2-monooxygenase, hydroxylase component small subunit, found in Gordonia sp. (strain TY-5).